We begin with the raw amino-acid sequence, 104 residues long: Glutaredoxin 1 (104 aa).

The Glutaredoxin domain maps to 1–96; it reads MNKSILHTII…KLLETQPKNK (96 aa). Residues cysteine 17 and cysteine 20 are joined by a disulfide bond.

This sequence belongs to the glutaredoxin family. In terms of assembly, monomer.

The protein resides in the cytoplasm. Its function is as follows. Has a glutathione-disulfide oxidoreductase activity in the presence of NADPH and glutathione reductase. Reduces low molecular weight disulfides and proteins. This Rickettsia typhi (strain ATCC VR-144 / Wilmington) protein is Glutaredoxin 1 (grxC1).